Reading from the N-terminus, the 302-residue chain is L-threonate dehydrogenase (302 aa).

Residues 7–35 (FHVGIVGLGSMGMGAALSCVRAGLSTWGA) and Thr102 contribute to the NAD(+) site. The active site involves Lys178. Lys246 is a binding site for NAD(+).

This sequence belongs to the HIBADH-related family. L-threonate dehydrogenase subfamily.

It catalyses the reaction L-threonate + NAD(+) = 2-dehydro-L-erythronate + NADH + H(+). Its function is as follows. Catalyzes oxidation of L-threonate to 2-oxo-tetronate. Can use either NAD(+) or NADP(+) as cosubstrate, with a preference for NAD(+). The chain is L-threonate dehydrogenase from Escherichia coli O6:H1 (strain CFT073 / ATCC 700928 / UPEC).